The following is a 701-amino-acid chain: MSCPYPFKVFSCTVSRHSHQAACVVAKTQATSQPRGALSPGGGFLAALALSVTGWRIGSKGHIVAQKTSTPPPDTIQAGDMITDFDQYLLGEGTHRQLWRVLGAHVQDDATHFAVWAPNARAVSVTGDFNGWSGTEMTAVGQTGVWQVRIPGVGDGALYKYQITDANGALREKADPVGFGAQHPPEQASVVRDIRGYGWRDGAWMETRAEAADRAAPISIYEVHLGSWRRKWDDGGRPLSYKEAAQDLVGYVRHMGFTHIELMPISEFPFDGSWGYQPVGLYAPTIRFGPPHEFRDLVDAAHAAGLGVLLDWVPGHFPTDEHGLATFDGTHLYEHADPKEGFHQDWNTLIFNYGRTEVRNYLVANALYWMEEYHLDGLRVDAVASMLYRDYSRDEGQWVPNKDGGRENLEAISFLQEMNVAVYGADASVMTVAEESTSFPGVSQPVHTGGLGFGYKWNMGWMNDTLSYMALDPIHRQHHHSQMTNPIMWQYSENFILPISHDEVVHGKGSMLEKMPGNDWEKLANLRAYYGYMWMHPGKKLIFMGCEFAQPGEWSHDGDLNWDAASRPAHAGVQALVRDLNHLYRDTPALHVKDCMPDGFAWICNDPAQSTLGFARFGAAGDAPVVVMCNFTPVERVAFRMGVPTPGEWDEVLNTDAAAYGGGNRGNLGGVLSEPTPCDGHAQSVTLTLPPLSTVVLRLKD.

The Nucleophile role is filled by D381. The active-site Proton donor is E434.

The protein belongs to the glycosyl hydrolase 13 family. GlgB subfamily. As to quaternary structure, monomer.

The enzyme catalyses Transfers a segment of a (1-&gt;4)-alpha-D-glucan chain to a primary hydroxy group in a similar glucan chain.. Its pathway is glycan biosynthesis; glycogen biosynthesis. Its function is as follows. Catalyzes the formation of the alpha-1,6-glucosidic linkages in glycogen by scission of a 1,4-alpha-linked oligosaccharide from growing alpha-1,4-glucan chains and the subsequent attachment of the oligosaccharide to the alpha-1,6 position. This Jannaschia sp. (strain CCS1) protein is 1,4-alpha-glucan branching enzyme GlgB.